The chain runs to 283 residues: Thymidylate synthase (283 aa).

DUMP is bound at residue R22. Catalysis depends on C160, which acts as the Nucleophile. DUMP is bound by residues R180–D183, N191, and H221–Y223. D183 is a binding site for (6R)-5,10-methylene-5,6,7,8-tetrahydrofolate. S282 contacts (6R)-5,10-methylene-5,6,7,8-tetrahydrofolate.

This sequence belongs to the thymidylate synthase family. Bacterial-type ThyA subfamily. Homodimer.

Its subcellular location is the cytoplasm. The enzyme catalyses dUMP + (6R)-5,10-methylene-5,6,7,8-tetrahydrofolate = 7,8-dihydrofolate + dTMP. The protein operates within pyrimidine metabolism; dTTP biosynthesis. In terms of biological role, catalyzes the reductive methylation of 2'-deoxyuridine-5'-monophosphate (dUMP) to 2'-deoxythymidine-5'-monophosphate (dTMP) while utilizing 5,10-methylenetetrahydrofolate (mTHF) as the methyl donor and reductant in the reaction, yielding dihydrofolate (DHF) as a by-product. This enzymatic reaction provides an intracellular de novo source of dTMP, an essential precursor for DNA biosynthesis. This Actinobacillus succinogenes (strain ATCC 55618 / DSM 22257 / CCUG 43843 / 130Z) protein is Thymidylate synthase.